A 241-amino-acid polypeptide reads, in one-letter code: Phosphoadenosine 5'-phosphosulfate reductase (241 aa).

The active-site Nucleophile; cysteine thiosulfonate intermediate is cysteine 235.

Belongs to the PAPS reductase family. CysH subfamily.

The protein localises to the cytoplasm. It carries out the reaction [thioredoxin]-disulfide + sulfite + adenosine 3',5'-bisphosphate + 2 H(+) = [thioredoxin]-dithiol + 3'-phosphoadenylyl sulfate. The protein operates within sulfur metabolism; hydrogen sulfide biosynthesis; sulfite from sulfate: step 3/3. In terms of biological role, catalyzes the formation of sulfite from phosphoadenosine 5'-phosphosulfate (PAPS) using thioredoxin as an electron donor. The sequence is that of Phosphoadenosine 5'-phosphosulfate reductase from Xanthomonas euvesicatoria pv. vesicatoria (strain 85-10) (Xanthomonas campestris pv. vesicatoria).